Consider the following 253-residue polypeptide: Precorrin-4 C(11)-methyltransferase (253 aa).

This sequence belongs to the precorrin methyltransferase family.

The enzyme catalyses precorrin-4 + S-adenosyl-L-methionine = precorrin-5 + S-adenosyl-L-homocysteine. Its pathway is cofactor biosynthesis; adenosylcobalamin biosynthesis; cob(II)yrinate a,c-diamide from precorrin-2 (aerobic route): step 4/10. Functionally, catalyzes the methylation of C-11 in precorrin-4 to form precorrin-5. This chain is Precorrin-4 C(11)-methyltransferase (cobM), found in Sinorhizobium sp.